The primary structure comprises 777 residues: Histone-lysine N-methyltransferase set9 (777 aa).

In terms of domain architecture, SET spans 117–231 (CPFEVNATNR…VGEEITVTYS (115 aa)). Disordered stretches follow at residues 263–414 (AVQK…ILSP) and 682–718 (RMGS…QGQY). Positions 291-301 (TALQASRTPSV) are enriched in polar residues. The segment covering 323–337 (TSTTDSAAQGAGADG) has biased composition (low complexity). Composition is skewed to polar residues over residues 371–405 (TAPS…QGSE) and 688–698 (KQGSSAPSTKG).

It belongs to the class V-like SAM-binding methyltransferase superfamily. Histone-lysine methyltransferase family. Suvar4-20 subfamily.

The protein localises to the nucleus. Its subcellular location is the chromosome. The enzyme catalyses L-lysyl(20)-[histone H4] + 3 S-adenosyl-L-methionine = N(6),N(6),N(6)-trimethyl-L-lysyl(20)-[histone H4] + 3 S-adenosyl-L-homocysteine + 3 H(+). Functionally, histone methyltransferase that trimethylates 'Lys-20' of histone H4 to form H4K20me3. The polypeptide is Histone-lysine N-methyltransferase set9 (hlm-1) (Neurospora crassa (strain ATCC 24698 / 74-OR23-1A / CBS 708.71 / DSM 1257 / FGSC 987)).